The chain runs to 432 residues: Adenylosuccinate synthetase (432 aa).

Residues 11–17 (GDEGKGK) and 39–41 (GHT) each bind GTP. D12 serves as the catalytic Proton acceptor. 2 residues coordinate Mg(2+): D12 and G39. IMP is bound by residues 12–15 (DEGK), 37–40 (NAGH), T134, R148, N230, T245, and R309. H40 serves as the catalytic Proton donor. Position 305 to 311 (305 to 311 (VTTGRKR)) interacts with substrate. GTP is bound by residues R311, 337–339 (KLD), and 419–421 (GTG).

Belongs to the adenylosuccinate synthetase family. In terms of assembly, homodimer. The cofactor is Mg(2+).

The protein localises to the cytoplasm. The enzyme catalyses IMP + L-aspartate + GTP = N(6)-(1,2-dicarboxyethyl)-AMP + GDP + phosphate + 2 H(+). It functions in the pathway purine metabolism; AMP biosynthesis via de novo pathway; AMP from IMP: step 1/2. Functionally, plays an important role in the de novo pathway and in the salvage pathway of purine nucleotide biosynthesis. Catalyzes the first committed step in the biosynthesis of AMP from IMP. The protein is Adenylosuccinate synthetase of Candida glabrata (strain ATCC 2001 / BCRC 20586 / JCM 3761 / NBRC 0622 / NRRL Y-65 / CBS 138) (Yeast).